Consider the following 142-residue polypeptide: Large ribosomal subunit protein uL13 (142 aa).

Belongs to the universal ribosomal protein uL13 family. In terms of assembly, part of the 50S ribosomal subunit.

Its function is as follows. This protein is one of the early assembly proteins of the 50S ribosomal subunit, although it is not seen to bind rRNA by itself. It is important during the early stages of 50S assembly. The sequence is that of Large ribosomal subunit protein uL13 from Psychrobacter sp. (strain PRwf-1).